A 572-amino-acid chain; its full sequence is Oxygen-dependent choline dehydrogenase (572 aa).

9–38 is an FAD binding site; sequence DYVIIGGGSAGSVLGARLSEDKDKNVLVLE. Histidine 477 serves as the catalytic Proton acceptor.

Belongs to the GMC oxidoreductase family. FAD serves as cofactor.

It catalyses the reaction choline + A = betaine aldehyde + AH2. The catalysed reaction is betaine aldehyde + NAD(+) + H2O = glycine betaine + NADH + 2 H(+). The protein operates within amine and polyamine biosynthesis; betaine biosynthesis via choline pathway; betaine aldehyde from choline (cytochrome c reductase route): step 1/1. Functionally, involved in the biosynthesis of the osmoprotectant glycine betaine. Catalyzes the oxidation of choline to betaine aldehyde and betaine aldehyde to glycine betaine at the same rate. This is Oxygen-dependent choline dehydrogenase from Staphylococcus epidermidis (strain ATCC 12228 / FDA PCI 1200).